Reading from the N-terminus, the 736-residue chain is 3',5'-cyclic-AMP phosphodiesterase 4B (736 aa).

Disordered stretches follow at residues 51–78, 189–209, and 282–301; these read QLPPLSQRQSERARTPEGDGISRPTTLP, LHGTSNKRSPAASQPPVSRVN, and KQNDVEIPSPTQKDREKKKK. Phosphoserine is present on Ser-290. Positions 330–659 constitute a PDEase domain; the sequence is VNTENEDHLA…NWYQSMIPQS (330 aa). His-406 serves as the catalytic Proton donor. His-406 lines the 3',5'-cyclic AMP pocket. The AMP site is built by His-406 and His-410. Zn(2+) is bound by residues His-410, His-446, Asp-447, and Asp-564. Residues Asp-447, Asp-564, Gln-615, and Phe-618 each contribute to the AMP site. Asp-447 lines the Mg(2+) pocket. Asp-447 is a Mn(2+) binding site. Residues Gln-615 and Phe-618 each coordinate 3',5'-cyclic AMP. 2 positions are modified to phosphoserine: Ser-659 and Ser-661. Residues 685 to 736 are disordered; that stretch reads DEEDSEGPEKEGEGHSYFSSTKTLCVIDPENRDSLGETDIDIATEDKSPVDT.

The protein belongs to the cyclic nucleotide phosphodiesterase family. PDE4 subfamily. As to quaternary structure, interacts with DISC1. It depends on Zn(2+) as a cofactor. The cofactor is Mg(2+). Mn(2+) serves as cofactor. As to expression, expressed in brain, heart, lung and skeletal muscle. Expressed in white blood cells. In terms of tissue distribution, brain-specific isoform.

Its subcellular location is the cytoplasm. It is found in the cell membrane. It catalyses the reaction 3',5'-cyclic AMP + H2O = AMP + H(+). It functions in the pathway purine metabolism; 3',5'-cyclic AMP degradation; AMP from 3',5'-cyclic AMP: step 1/1. Its activity is regulated as follows. Inhibited by rolipram. In terms of biological role, hydrolyzes the second messenger cAMP, which is a key regulator of many important physiological processes. May be involved in mediating central nervous system effects of therapeutic agents ranging from antidepressants to antiasthmatic and anti-inflammatory agents. This chain is 3',5'-cyclic-AMP phosphodiesterase 4B, found in Homo sapiens (Human).